Here is a 487-residue protein sequence, read N- to C-terminus: L-tartrate/succinate antiporter (487 aa).

14 helical membrane passes run 10–30 (YLAPLAVIAIIALLPLPAGLE), 33–53 (TWLYFAVFTGVIVGLILEPVP), 54–74 (GAVVAMVGISIIAILSPWLLF), 93–113 (WAVSGFSNSVIWLIFAAFMFG), 137–157 (TLFLGYAVMFSELILAPVTPS), 189–209 (IGSYIMWMGIVADCVTSAIFL), 236–256 (FLGMLPLSILLVLLVPWLAYV), 292–312 (LMVGALVLWIFGGDYIDAAMV), 313–333 (GYSVVALMLLLRIICWDDIVS), 340–360 (VFFWLASLITLATGLNNTGFI), 370–390 (SLSGYSPTIVMVALIVVFYLL), 393–413 (FFASATAYTSALAPMMIAAAL), 418–438 (IPLPVFCLMVGAAIGLGSILT), and 462–482 (LGAIFGLIFLVLLVITGLLWM).

The protein belongs to the SLC13A/DASS transporter (TC 2.A.47) family. DIT1 subfamily.

The protein localises to the cell inner membrane. The catalysed reaction is (2R,3R)-tartrate(out) + succinate(in) = (2R,3R)-tartrate(in) + succinate(out). Functionally, catalyzes the uptake of tartrate in exchange for intracellular succinate. Essential for anaerobic L-tartrate fermentation. The sequence is that of L-tartrate/succinate antiporter (ttdT) from Escherichia coli O6:H1 (strain CFT073 / ATCC 700928 / UPEC).